Reading from the N-terminus, the 129-residue chain is Small ribosomal subunit protein uS11 (129 aa).

This sequence belongs to the universal ribosomal protein uS11 family. In terms of assembly, part of the 30S ribosomal subunit. Interacts with proteins S7 and S18. Binds to IF-3.

Functionally, located on the platform of the 30S subunit, it bridges several disparate RNA helices of the 16S rRNA. Forms part of the Shine-Dalgarno cleft in the 70S ribosome. This chain is Small ribosomal subunit protein uS11, found in Novosphingobium aromaticivorans (strain ATCC 700278 / DSM 12444 / CCUG 56034 / CIP 105152 / NBRC 16084 / F199).